The primary structure comprises 263 residues: ATP synthase subunit delta (263 aa).

It belongs to the ATPase delta chain family. F-type ATPases have 2 components, F(1) - the catalytic core - and F(0) - the membrane proton channel. F(1) has five subunits: alpha(3), beta(3), gamma(1), delta(1), epsilon(1). F(0) has three main subunits: a(1), b(2) and c(10-14). The alpha and beta chains form an alternating ring which encloses part of the gamma chain. F(1) is attached to F(0) by a central stalk formed by the gamma and epsilon chains, while a peripheral stalk is formed by the delta and b chains.

Its subcellular location is the cell membrane. Functionally, f(1)F(0) ATP synthase produces ATP from ADP in the presence of a proton or sodium gradient. F-type ATPases consist of two structural domains, F(1) containing the extramembraneous catalytic core and F(0) containing the membrane proton channel, linked together by a central stalk and a peripheral stalk. During catalysis, ATP synthesis in the catalytic domain of F(1) is coupled via a rotary mechanism of the central stalk subunits to proton translocation. Its function is as follows. This protein is part of the stalk that links CF(0) to CF(1). It either transmits conformational changes from CF(0) to CF(1) or is implicated in proton conduction. The polypeptide is ATP synthase subunit delta (Cutibacterium acnes (strain DSM 16379 / KPA171202) (Propionibacterium acnes)).